The primary structure comprises 454 residues: Gustatory and odorant receptor 21a (454 aa).

The Cytoplasmic segment spans residues 1–114 (MTFLDRTMSF…LPRTGYSWGS (114 aa)). A helical transmembrane segment spans residues 115–135 (KQVMWAIFIYSCQTTIVVLVL). Topologically, residues 136–153 (RERVKKFVTSPDKRFDEA) are extracellular. Residues 154-174 (IYNVIFISLLFTNFLLPVASW) traverse the membrane as a helical segment. The Cytoplasmic segment spans residues 175–206 (RHGPQVAIFKNMWTNYQYKFFKTTGSPIVFPN). A helical membrane pass occupies residues 207-227 (LYPLTWSLCVFSWLLSIAINL). At 228 to 237 (SQYFLQPDFR) the chain is on the extracellular side. A helical transmembrane segment spans residues 238-258 (LWYTFAYYPIIAMLNCFCSLW). Residues 259–312 (YINCNAFGTASRALSDALQTTIRGEKPAQKLTEYRHLWVDLSHMMQQLGRAYSN) lie on the Cytoplasmic side of the membrane. Residues 313–333 (MYGMYCLVIFFTTIIATYGSI) traverse the membrane as a helical segment. Residues 334-345 (SEIIDHGATYKE) are Extracellular-facing. Residues 346-366 (VGLFVIVFYCMGLLYIICNEA) traverse the membrane as a helical segment. Residues 367–422 (HYASRKVGLDFQTKLLNINLTAVDAATQKEVEMLLVAINKNPPIMNLDGYANINRE) lie on the Cytoplasmic side of the membrane. A helical membrane pass occupies residues 423-443 (LITTNISFMATYLVVLLQFKI). The Extracellular portion of the chain corresponds to 444–454 (TEQRRIGQQQA).

Belongs to the insect chemoreceptor superfamily. Gustatory receptor (GR) family. Gr21a subfamily. Gr21a and Gr63a probably form a heterodimer that responds to CO(2). Expressed in the adult labellar chemosensory neurons. Carbon dioxide-responsive neurons coexpress Gr21a and Gr63a in a pair of chemosensory receptors at both larval and adult life stages. A single bilateral neuron, expressing the Gr21a receptor, is responsible for CO(2) detection in larvae.

It localises to the cell membrane. Gustatory and odorant receptor which mediates acceptance or avoidance behavior, depending on its substrates. Gr21a and Gr63a together are sufficient for carbon dioxide detection and avoidance behavior. It is possible that the CO(2) receptors Gr63a and Gr21a activate the TRPC channels through Galpha49B and Plc21C. This innate olfactory avoidance behavior can be inhibited by inhibitory interactions of the odors such as 1-hexanol and 2,3-butanedione with Gr21a and Gr63a. The polypeptide is Gustatory and odorant receptor 21a (Gr21a) (Drosophila melanogaster (Fruit fly)).